The following is a 343-amino-acid chain: Aspartate carbamoyltransferase catalytic subunit (343 aa).

Carbamoyl phosphate is bound by residues R54 and T55. K82 contacts L-aspartate. 3 residues coordinate carbamoyl phosphate: R104, H134, and Q137. The L-aspartate site is built by R177 and R232. Positions 277 and 278 each coordinate carbamoyl phosphate. The disordered stretch occupies residues 323-343 (PDQSNPQRNVTNTSNWQETKR).

This sequence belongs to the aspartate/ornithine carbamoyltransferase superfamily. ATCase family. In terms of assembly, heterododecamer (2C3:3R2) of six catalytic PyrB chains organized as two trimers (C3), and six regulatory PyrI chains organized as three dimers (R2).

It catalyses the reaction carbamoyl phosphate + L-aspartate = N-carbamoyl-L-aspartate + phosphate + H(+). It participates in pyrimidine metabolism; UMP biosynthesis via de novo pathway; (S)-dihydroorotate from bicarbonate: step 2/3. Its function is as follows. Catalyzes the condensation of carbamoyl phosphate and aspartate to form carbamoyl aspartate and inorganic phosphate, the committed step in the de novo pyrimidine nucleotide biosynthesis pathway. This is Aspartate carbamoyltransferase catalytic subunit from Renibacterium salmoninarum (strain ATCC 33209 / DSM 20767 / JCM 11484 / NBRC 15589 / NCIMB 2235).